Here is a 589-residue protein sequence, read N- to C-terminus: Aspartate--tRNA ligase (589 aa).

Residue Glu176 coordinates L-aspartate. An aspartate region spans residues 200-203; it reads QLFK. Arg222 contacts L-aspartate. ATP-binding positions include 222 to 224 and Gln231; that span reads RDE. His449 contacts L-aspartate. Glu483 is a binding site for ATP. Arg490 is an L-aspartate binding site. 535 to 538 is an ATP binding site; the sequence is GLDR.

The protein belongs to the class-II aminoacyl-tRNA synthetase family. Type 1 subfamily. As to quaternary structure, homodimer.

It localises to the cytoplasm. It catalyses the reaction tRNA(Asp) + L-aspartate + ATP = L-aspartyl-tRNA(Asp) + AMP + diphosphate. Functionally, catalyzes the attachment of L-aspartate to tRNA(Asp) in a two-step reaction: L-aspartate is first activated by ATP to form Asp-AMP and then transferred to the acceptor end of tRNA(Asp). The chain is Aspartate--tRNA ligase from Enterococcus faecalis (strain ATCC 700802 / V583).